Here is a 397-residue protein sequence, read N- to C-terminus: Serpin B10 (397 aa).

Positions K74–K77 match the Nuclear localization signal motif.

Belongs to the serpin family. Ov-serpin subfamily.

Its subcellular location is the nucleus. It localises to the cytoplasm. Its function is as follows. Protease inhibitor that may play a role in the regulation of protease activities during hematopoiesis and apoptosis induced by TNF. May regulate protease activities in the cytoplasm and in the nucleus. The sequence is that of Serpin B10 (SERPINB10) from Plecturocebus moloch (Dusky titi monkey).